Here is a 63-residue protein sequence, read N- to C-terminus: Large ribosomal subunit protein uL29 (63 aa).

The protein belongs to the universal ribosomal protein uL29 family.

In Bacillus cereus (strain ATCC 14579 / DSM 31 / CCUG 7414 / JCM 2152 / NBRC 15305 / NCIMB 9373 / NCTC 2599 / NRRL B-3711), this protein is Large ribosomal subunit protein uL29.